The primary structure comprises 212 residues: FMN-dependent NADH:quinone oxidoreductase (212 aa).

FMN contacts are provided by residues serine 10, 16-18 (SFS), and 98-101 (MWNF).

The protein belongs to the azoreductase type 1 family. Homodimer. FMN serves as cofactor.

It carries out the reaction 2 a quinone + NADH + H(+) = 2 a 1,4-benzosemiquinone + NAD(+). The catalysed reaction is N,N-dimethyl-1,4-phenylenediamine + anthranilate + 2 NAD(+) = 2-(4-dimethylaminophenyl)diazenylbenzoate + 2 NADH + 2 H(+). Quinone reductase that provides resistance to thiol-specific stress caused by electrophilic quinones. In terms of biological role, also exhibits azoreductase activity. Catalyzes the reductive cleavage of the azo bond in aromatic azo compounds to the corresponding amines. This is FMN-dependent NADH:quinone oxidoreductase from Desulfotalea psychrophila (strain LSv54 / DSM 12343).